A 577-amino-acid polypeptide reads, in one-letter code: E3 ubiquitin protein ligase RIN3 (577 aa).

The next 6 membrane-spanning stretches (helical) occupy residues isoleucine 3–tryptophan 23, threonine 58–leucine 78, glycine 120–alanine 140, tyrosine 162–isoleucine 182, tyrosine 191–isoleucine 211, and tyrosine 272–leucine 292. The segment at cysteine 337–arginine 379 adopts an RING-type; atypical zinc-finger fold. Residues serine 537–methionine 577 enclose the CUE domain.

Interacts (via C-terminus) with RPM1 (via N-terminus).

The protein resides in the membrane. The enzyme catalyses S-ubiquitinyl-[E2 ubiquitin-conjugating enzyme]-L-cysteine + [acceptor protein]-L-lysine = [E2 ubiquitin-conjugating enzyme]-L-cysteine + N(6)-ubiquitinyl-[acceptor protein]-L-lysine.. The protein operates within protein modification; protein ubiquitination. In terms of biological role, E3 ubiquitin protein ligase that acts as a positive regulator of RPM1- and RPS2-dependent hypersensitive response (HR), in association with RIN2. Probably not required for RPM1 degradation during HR. The protein is E3 ubiquitin protein ligase RIN3 (RIN3) of Arabidopsis thaliana (Mouse-ear cress).